The following is a 128-amino-acid chain: MTDSTFLDEITWTSDGLVPAIARDAKTGTVLMMAWMNRESLSLTAQENIAVYWSRSRGKLWRKGETSGFTQHVKSIRLDCDADVIVLDVEQMGGIACHTGRESCFYRELQNGKWVATDPVLKDPKEIY.

A Mg(2+)-binding site is contributed by Asp79. Residue Cys80 participates in Zn(2+) binding. Mg(2+)-binding residues include Asp81 and Asp83. Residues Cys97 and Cys104 each coordinate Zn(2+).

The protein belongs to the PRA-CH family. In terms of assembly, homodimer. Requires Mg(2+) as cofactor. It depends on Zn(2+) as a cofactor.

The protein localises to the cytoplasm. The catalysed reaction is 1-(5-phospho-beta-D-ribosyl)-5'-AMP + H2O = 1-(5-phospho-beta-D-ribosyl)-5-[(5-phospho-beta-D-ribosylamino)methylideneamino]imidazole-4-carboxamide. The protein operates within amino-acid biosynthesis; L-histidine biosynthesis; L-histidine from 5-phospho-alpha-D-ribose 1-diphosphate: step 3/9. Its function is as follows. Catalyzes the hydrolysis of the adenine ring of phosphoribosyl-AMP. The chain is Phosphoribosyl-AMP cyclohydrolase from Saccharophagus degradans (strain 2-40 / ATCC 43961 / DSM 17024).